The sequence spans 288 residues: uncharacterized protein (288 aa).

4 helical membrane passes run 43–63 (LFTL…NYII), 190–210 (LFIF…FLLE), 243–263 (GIPI…SILI), and 265–285 (LLQM…NKSL).

It localises to the cell membrane. This is an uncharacterized protein from Rickettsia prowazekii (strain Madrid E).